Here is a 135-residue protein sequence, read N- to C-terminus: Large ribosomal subunit protein uL16c (135 aa).

It belongs to the universal ribosomal protein uL16 family. As to quaternary structure, part of the 50S ribosomal subunit.

Its subcellular location is the plastid. The protein localises to the chloroplast. The sequence is that of Large ribosomal subunit protein uL16c from Lactuca sativa (Garden lettuce).